Consider the following 369-residue polypeptide: Glutamate 5-kinase (369 aa).

Lys7 is an ATP binding site. 3 residues coordinate substrate: Ser48, Asp135, and Asn147. ATP-binding positions include 167-168 and 208-214; these read TD and SGGMASK. The PUA domain occupies 275–353; sequence AGALHLDEGA…HEIAALLGIE (79 aa).

The protein belongs to the glutamate 5-kinase family.

The protein localises to the cytoplasm. The catalysed reaction is L-glutamate + ATP = L-glutamyl 5-phosphate + ADP. It functions in the pathway amino-acid biosynthesis; L-proline biosynthesis; L-glutamate 5-semialdehyde from L-glutamate: step 1/2. Catalyzes the transfer of a phosphate group to glutamate to form L-glutamate 5-phosphate. The sequence is that of Glutamate 5-kinase from Gloeobacter violaceus (strain ATCC 29082 / PCC 7421).